The sequence spans 33 residues: Toxin BcV (33 aa).

C6 and C30 form a disulfide bridge.

The protein localises to the secreted. It is found in the nematocyst. In terms of biological role, potently and reversibly blocks mammalian Kv11/KCNH/ERG voltage-gated potassium channels. Acts as a gating-modifier toxin that shifts the voltage-dependence of ERG activation in the positive direction and suppresses its current amplitudes elicited by strong depolarizing pulses that maximally activate the channels. The protein is Toxin BcV of Bunodosoma caissarum (Sea anemone).